Consider the following 103-residue polypeptide: U-scoloptoxin(24)-Er1a (103 aa).

The signal sequence occupies residues 1–23 (MVKSLHCLIGIVLFLAILNAGNG).

Belongs to the scoloptoxin-24 family. Contains 1 disulfide bond. In terms of tissue distribution, expressed by the venom gland.

The protein resides in the secreted. This Ethmostigmus rubripes (Giant centipede) protein is U-scoloptoxin(24)-Er1a.